Consider the following 260-residue polypeptide: Thiazole synthase (260 aa).

The Schiff-base intermediate with DXP role is filled by lysine 96. Residues glycine 157, 184-185, and 206-207 contribute to the 1-deoxy-D-xylulose 5-phosphate site; these read AG and NT.

The protein belongs to the ThiG family. In terms of assembly, homotetramer. Forms heterodimers with either ThiH or ThiS.

The protein localises to the cytoplasm. The catalysed reaction is [ThiS sulfur-carrier protein]-C-terminal-Gly-aminoethanethioate + 2-iminoacetate + 1-deoxy-D-xylulose 5-phosphate = [ThiS sulfur-carrier protein]-C-terminal Gly-Gly + 2-[(2R,5Z)-2-carboxy-4-methylthiazol-5(2H)-ylidene]ethyl phosphate + 2 H2O + H(+). It functions in the pathway cofactor biosynthesis; thiamine diphosphate biosynthesis. In terms of biological role, catalyzes the rearrangement of 1-deoxy-D-xylulose 5-phosphate (DXP) to produce the thiazole phosphate moiety of thiamine. Sulfur is provided by the thiocarboxylate moiety of the carrier protein ThiS. In vitro, sulfur can be provided by H(2)S. The protein is Thiazole synthase of Bradyrhizobium sp. (strain BTAi1 / ATCC BAA-1182).